We begin with the raw amino-acid sequence, 502 residues long: Beta-amyrin 28-monooxygenase CYP716A379 (502 aa).

Residues 3–23 (LITLLSALLVLAIVSLSTFFV) traverse the membrane as a helical; Signal-anchor for type II membrane protein segment. N-linked (GlcNAc...) asparagine glycosylation is found at asparagine 88 and asparagine 181. Residue cysteine 444 coordinates heme.

It belongs to the cytochrome P450 family. Requires heme as cofactor. As to expression, mainly expressed in flowers and flower buds, to a lesser extent in young leaves and, at low levels, in old leaves, stems and roots.

The protein localises to the membrane. It catalyses the reaction beta-amyrin + 3 reduced [NADPH--hemoprotein reductase] + 3 O2 = oleanolate + 3 oxidized [NADPH--hemoprotein reductase] + 4 H2O + 4 H(+). It participates in secondary metabolite biosynthesis; terpenoid biosynthesis. In terms of biological role, component of the oleanane-type triterpene saponins (e.g. saponarioside A and saponarioside B) biosynthetic pathway, leading to the production of natural products with detergent properties used as traditional sources of soap. An oxidoreductase that facilitates the oxidation of the methyl group to a carboxyl group at the C-28 position of beta-amyrin, resulting in the formation of oleanolic acid. Catalyzes also the subsequent oxidation of the methyl group to a&lt; carboxyl group at the C-16 alpha position of oleanolic acid, resulting in the formation of echinocystic acid. In Saponaria officinalis (Common soapwort), this protein is Beta-amyrin 28-monooxygenase CYP716A379.